Consider the following 57-residue polypeptide: UPF0391 membrane protein RPD_2934 (57 aa).

Transmembrane regions (helical) follow at residues 6–26 (WALI…TGVS) and 35–55 (ILFY…FTIF).

It belongs to the UPF0391 family.

It is found in the cell membrane. This Rhodopseudomonas palustris (strain BisB5) protein is UPF0391 membrane protein RPD_2934.